Consider the following 969-residue polypeptide: Liprin-beta-1 (969 aa).

Serine 37 is modified (phosphoserine). Threonine 39 carries the post-translational modification Phosphothreonine. Serine 40 is subject to Phosphoserine. The stretch at 99-310 (GDVYQERLAR…CLSRYRKMQD (212 aa)) forms a coiled coil. N6-acetyllysine is present on lysine 291. Disordered regions lie at residues 342-361 (DLER…RDLL), 381-407 (LLPP…FEEG), and 424-482 (GVST…RKAR). The span at 346 to 358 (STSSTPGMGSPSR) shows a compositional bias: low complexity. Phosphoserine is present on residues serine 403 and serine 435. The segment covering 426–438 (STSSLQKSSSLGN) has biased composition (low complexity). Basic and acidic residues predominate over residues 439-452 (LKKEASDGTDKAPT). Residue lysine 440 forms a Glycyl lysine isopeptide (Lys-Gly) (interchain with G-Cter in SUMO2) linkage. At serine 500 the chain carries Phosphoserine. A compositionally biased stretch (polar residues) spans 518 to 529 (AGTSRSKGSQGT). Positions 518-593 (AGTSRSKGSQ…PRLGWSRDLG (76 aa)) are disordered. Serine 538 carries the post-translational modification Phosphoserine. Basic residues predominate over residues 543–557 (KKSRGIMRLFGKLRR). Phosphoserine occurs at positions 560 and 595. 2 consecutive SAM domains span residues 606–670 (WTKE…LGSE) and 678–741 (LDFN…LRIN). Phosphoserine is present on residues serine 753 and serine 757. Positions 763-835 (VQQWTNHRVM…ATHFNLLIGA (73 aa)) constitute an SAM 3 domain. Phosphoserine occurs at positions 957, 959, and 961. Threonine 963 carries the post-translational modification Phosphothreonine.

Belongs to the liprin family. Liprin-beta subfamily. As to quaternary structure, forms homodimers and heterodimers. Interacts with S100A4 in a Ca(2+)-dependent mode. Part of a cortical microtubule stabilization complex (CMSC) composed of KANK1, PPFIA1, PPFIBP1, ERC1/ELKS, PHLDB2/LL5beta, CLASPs, KIF21A and possibly additional interactors; within CMSCs KANK1 and PHLDB2/LL5beta seem to be the core components for recruiting microtubule-binding proteins KIF21A and CLASPs, whereas PPFIA1, PPFIBP1 and ERC1/ELKS serve as scaffolds for protein clustering. Interacts with KANK1 (via CC1 domain, residues 244-339).

The protein resides in the cytoplasm. The protein localises to the cell cortex. Functionally, may regulate the disassembly of focal adhesions. Did not bind receptor-like tyrosine phosphatases type 2A. This is Liprin-beta-1 (Ppfibp1) from Mus musculus (Mouse).